We begin with the raw amino-acid sequence, 299 residues long: Bifunctional protein FolD (299 aa).

NADP(+)-binding positions include 166–168 (GRS), Ser-191, and Ile-232.

The protein belongs to the tetrahydrofolate dehydrogenase/cyclohydrolase family. Homodimer.

It catalyses the reaction (6R)-5,10-methylene-5,6,7,8-tetrahydrofolate + NADP(+) = (6R)-5,10-methenyltetrahydrofolate + NADPH. The catalysed reaction is (6R)-5,10-methenyltetrahydrofolate + H2O = (6R)-10-formyltetrahydrofolate + H(+). The protein operates within one-carbon metabolism; tetrahydrofolate interconversion. Its function is as follows. Catalyzes the oxidation of 5,10-methylenetetrahydrofolate to 5,10-methenyltetrahydrofolate and then the hydrolysis of 5,10-methenyltetrahydrofolate to 10-formyltetrahydrofolate. The sequence is that of Bifunctional protein FolD from Dinoroseobacter shibae (strain DSM 16493 / NCIMB 14021 / DFL 12).